We begin with the raw amino-acid sequence, 460 residues long: ATP synthase subunit beta (460 aa).

An ATP-binding site is contributed by 150 to 157 (GGAGVGKT).

Belongs to the ATPase alpha/beta chains family. As to quaternary structure, F-type ATPases have 2 components, CF(1) - the catalytic core - and CF(0) - the membrane proton channel. CF(1) has five subunits: alpha(3), beta(3), gamma(1), delta(1), epsilon(1). CF(0) has three main subunits: a(1), b(2) and c(9-12). The alpha and beta chains form an alternating ring which encloses part of the gamma chain. CF(1) is attached to CF(0) by a central stalk formed by the gamma and epsilon chains, while a peripheral stalk is formed by the delta and b chains.

It is found in the cell inner membrane. The catalysed reaction is ATP + H2O + 4 H(+)(in) = ADP + phosphate + 5 H(+)(out). In terms of biological role, produces ATP from ADP in the presence of a proton gradient across the membrane. The catalytic sites are hosted primarily by the beta subunits. The chain is ATP synthase subunit beta from Pectobacterium carotovorum subsp. carotovorum (strain PC1).